Here is a 260-residue protein sequence, read N- to C-terminus: 2-amino-3,7-dideoxy-D-threo-hept-6-ulosonate synthase 1 (260 aa).

The active-site Proton acceptor is aspartate 26. 1-deoxy-D-threo-hexo-2,5-diulose 6-phosphate-binding positions include aspartate 26–threonine 30 and tyrosine 144–arginine 146. The active-site Proton donor is the tyrosine 144. The active-site Schiff-base intermediate with substrate is the lysine 172. 1-deoxy-D-threo-hexo-2,5-diulose 6-phosphate-binding positions include glycine 194–glycine 195 and glycine 221–arginine 222.

The protein belongs to the DeoC/FbaB aldolase family. ADHS subfamily. In terms of assembly, homodecamer.

The enzyme catalyses 1-deoxy-D-threo-hexo-2,5-diulose 6-phosphate + L-aspartate 4-semialdehyde = 2,3-dioxopropyl phosphate + 2-amino-2,3,7-trideoxy-D-lyxo-hept-6-ulosonate. In terms of biological role, catalyzes a transaldol reaction between 6-deoxy-5-ketofructose 1-phosphate (DKFP) and L-aspartate semialdehyde (ASA) with an elimination of hydroxypyruvaldehyde phosphate to yield 2-amino-3,7-dideoxy-D-threo-hept-6-ulosonate (ADH). Plays a key role in an alternative pathway of the biosynthesis of 3-dehydroquinate (DHQ), which is involved in the canonical pathway for the biosynthesis of aromatic amino acids. In Archaeoglobus fulgidus (strain ATCC 49558 / DSM 4304 / JCM 9628 / NBRC 100126 / VC-16), this protein is 2-amino-3,7-dideoxy-D-threo-hept-6-ulosonate synthase 1.